The primary structure comprises 289 residues: Serine/threonine-protein phosphatase Pgam5, mitochondrial (289 aa).

A helical transmembrane segment spans residues phenylalanine 7–leucine 23.

It belongs to the phosphoglycerate mutase family. BPG-dependent PGAM subfamily. In terms of assembly, interacts with Pk92B/ASK1.

The protein resides in the mitochondrion outer membrane. It catalyses the reaction O-phospho-L-seryl-[protein] + H2O = L-seryl-[protein] + phosphate. The enzyme catalyses O-phospho-L-threonyl-[protein] + H2O = L-threonyl-[protein] + phosphate. Displays phosphatase activity for serine/threonine residues, and dephosphorylates and activates Pk92B kinase. Has apparently no phosphoglycerate mutase activity. The polypeptide is Serine/threonine-protein phosphatase Pgam5, mitochondrial (Pgam5) (Drosophila melanogaster (Fruit fly)).